The following is a 547-amino-acid chain: Probable hydroxyacid-oxoacid transhydrogenase, mitochondrial (547 aa).

This sequence belongs to the iron-containing alcohol dehydrogenase family. Hydroxyacid-oxoacid transhydrogenase subfamily.

It is found in the mitochondrion. It carries out the reaction (S)-3-hydroxybutanoate + 2-oxoglutarate = (R)-2-hydroxyglutarate + acetoacetate. It catalyses the reaction 4-hydroxybutanoate + 2-oxoglutarate = (R)-2-hydroxyglutarate + succinate semialdehyde. Its function is as follows. Catalyzes the cofactor-independent reversible oxidation of gamma-hydroxybutyrate (GHB) to succinic semialdehyde (SSA) coupled to reduction of 2-ketoglutarate (2-KG) to D-2-hydroxyglutarate (D-2-HG). L-3-hydroxybutyrate (L-3-OHB) is also a substrate for HOT when using 2-KG as hydrogen acceptor, resulting in the formation of D-2-HG. This is Probable hydroxyacid-oxoacid transhydrogenase, mitochondrial (adhfe1) from Dictyostelium discoideum (Social amoeba).